The following is a 131-amino-acid chain: uncharacterized protein (131 aa).

The disordered stretch occupies residues 1-67; sequence MCSARKLLRG…HSGEPIGDDY (67 aa). Phosphoserine is present on S14. The helical transmembrane segment at 99–119 threads the bilayer; the sequence is VVVLFFWLMLWFLGLQALGLV.

The protein belongs to the FAM241 family.

The protein localises to the membrane. This is an uncharacterized protein from Mus musculus (Mouse).